We begin with the raw amino-acid sequence, 198 residues long: MAKILVLYYSMYGHIETMAHAVAEGAKKVDGAEVIIKRVPETMPPEIFAKAGGKTQNAPVATPQELADYDAIIFGTPTRFGNMSGQMRTFLDQTGGLWASGSLYGKLGSVFSSTGTGGGQEQTITSTWTTLAHHGMVIVPIGYAAQELFDVSQVRGGTPYGATTIAGGDGSRQPSQEELSIARYQGEYVAGLAVKLNG.

Residues 4–189 form the Flavodoxin-like domain; the sequence is ILVLYYSMYG…SIARYQGEYV (186 aa). FMN contacts are provided by residues 10 to 15 and 78 to 80; these read SMYGHI and TRF. Tyrosine 12 contributes to the NAD(+) binding site. Tryptophan 98 provides a ligand contact to substrate. Residues 113–118 and histidine 133 contribute to the FMN site; that span reads STGTGG.

It belongs to the WrbA family. It depends on FMN as a cofactor.

It carries out the reaction a quinone + NADH + H(+) = a quinol + NAD(+). The catalysed reaction is a quinone + NADPH + H(+) = a quinol + NADP(+). In Salmonella paratyphi C (strain RKS4594), this protein is NAD(P)H dehydrogenase (quinone).